Reading from the N-terminus, the 309-residue chain is MEGINKTAKMQFFFRPFSPDPEVQMLIFVVFLMMYLTSLGGNATIAVIVQINHSLHTPMYFFLANLAVLEIFYTSSITPLALANLLSMGKTPVSITGCGTQMFFFVFLGGADCVLLVVMAYDQFIAICHPLRYRLIMSWSLCVELLVGSLVLGFLLSLPLTILIFHLPFCHNDEIYHFYCDMPAVMRLACADTRVHKTALYIISFIVLSIPLSLISISYVFIVVAILRIRSAEGRQQAYSTCSSHILVVLLQYGCTSFIYLSPSSSYSPEMGRVVSVAYTFITPILNPLIYSLRNKELKDALRKALRKF.

The Extracellular portion of the chain corresponds to 1-25 (MEGINKTAKMQFFFRPFSPDPEVQM). N-linked (GlcNAc...) asparagine glycosylation is present at N5. A helical membrane pass occupies residues 26 to 46 (LIFVVFLMMYLTSLGGNATIA). The Cytoplasmic segment spans residues 47–54 (VIVQINHS). The helical transmembrane segment at 55–75 (LHTPMYFFLANLAVLEIFYTS) threads the bilayer. Residues 76–100 (SITPLALANLLSMGKTPVSITGCGT) lie on the Extracellular side of the membrane. Cysteines 98 and 190 form a disulfide. The helical transmembrane segment at 101–121 (QMFFFVFLGGADCVLLVVMAY) threads the bilayer. Residues 122–140 (DQFIAICHPLRYRLIMSWS) are Cytoplasmic-facing. The chain crosses the membrane as a helical span at residues 141–161 (LCVELLVGSLVLGFLLSLPLT). Residues 162 to 198 (ILIFHLPFCHNDEIYHFYCDMPAVMRLACADTRVHKT) lie on the Extracellular side of the membrane. Residues 199–218 (ALYIISFIVLSIPLSLISIS) form a helical membrane-spanning segment. The Cytoplasmic portion of the chain corresponds to 219–238 (YVFIVVAILRIRSAEGRQQA). The chain crosses the membrane as a helical span at residues 239–259 (YSTCSSHILVVLLQYGCTSFI). The Extracellular portion of the chain corresponds to 260 to 272 (YLSPSSSYSPEMG). The chain crosses the membrane as a helical span at residues 273–293 (RVVSVAYTFITPILNPLIYSL). Residues 294–309 (RNKELKDALRKALRKF) lie on the Cytoplasmic side of the membrane.

Belongs to the G-protein coupled receptor 1 family.

The protein resides in the cell membrane. In terms of biological role, odorant receptor. The sequence is that of Olfactory receptor 10V1 (OR10V1) from Homo sapiens (Human).